The sequence spans 855 residues: DNA mismatch repair protein MutS (855 aa).

Residue 613 to 620 (GPNMGGKS) participates in ATP binding. Residues 796–816 (TTSLPHEMPSQQSGKPASPMQ) form a disordered region.

Belongs to the DNA mismatch repair MutS family.

In terms of biological role, this protein is involved in the repair of mismatches in DNA. It is possible that it carries out the mismatch recognition step. This protein has a weak ATPase activity. This is DNA mismatch repair protein MutS from Pseudomonas aeruginosa (strain ATCC 15692 / DSM 22644 / CIP 104116 / JCM 14847 / LMG 12228 / 1C / PRS 101 / PAO1).